Consider the following 463-residue polypeptide: ATP synthase subunit beta (463 aa).

152–159 lines the ATP pocket; that stretch reads GGAGVGKT.

This sequence belongs to the ATPase alpha/beta chains family. F-type ATPases have 2 components, CF(1) - the catalytic core - and CF(0) - the membrane proton channel. CF(1) has five subunits: alpha(3), beta(3), gamma(1), delta(1), epsilon(1). CF(0) has three main subunits: a(1), b(2) and c(9-12). The alpha and beta chains form an alternating ring which encloses part of the gamma chain. CF(1) is attached to CF(0) by a central stalk formed by the gamma and epsilon chains, while a peripheral stalk is formed by the delta and b chains.

It is found in the cell inner membrane. It carries out the reaction ATP + H2O + 4 H(+)(in) = ADP + phosphate + 5 H(+)(out). Produces ATP from ADP in the presence of a proton gradient across the membrane. The catalytic sites are hosted primarily by the beta subunits. The sequence is that of ATP synthase subunit beta from Shewanella baltica (strain OS223).